The sequence spans 184 residues: DOMON domain-containing protein CBG21755 (184 aa).

The first 20 residues, Met-1 to Ser-20, serve as a signal peptide directing secretion. Positions Glu-28–Gly-145 constitute a DOMON domain. Asn-49 is a glycosylation site (N-linked (GlcNAc...) asparagine).

The protein localises to the secreted. The chain is DOMON domain-containing protein CBG21755 from Caenorhabditis briggsae.